A 298-amino-acid polypeptide reads, in one-letter code: Tyrosine recombinase XerC (298 aa).

The 87-residue stretch at 2–88 (TDLHTDVERY…ALRSFFDWLV (87 aa)) folds into the Core-binding (CB) domain. The region spanning 109-288 (HLPKNIDVDD…DFQHLASVYD (180 aa)) is the Tyr recombinase domain. Catalysis depends on residues R148, K172, H240, R243, and H266. The active-site O-(3'-phospho-DNA)-tyrosine intermediate is the Y275.

Belongs to the 'phage' integrase family. XerC subfamily. In terms of assembly, forms a cyclic heterotetrameric complex composed of two molecules of XerC and two molecules of XerD, in which XerC interacts with XerD via its C-terminal region, XerD interacts with XerC via its C-terminal region and so on.

The protein resides in the cytoplasm. With respect to regulation, ftsK may regulate the catalytic switch between XerC and XerD in the heterotetrameric complex during the two steps of the recombination process. Functionally, site-specific tyrosine recombinase, which acts by catalyzing the cutting and rejoining of the recombining DNA molecules. Binds cooperatively to specific DNA consensus sequences that are separated from XerD binding sites by a short central region, forming the heterotetrameric XerC-XerD complex that recombines DNA substrates. The complex is essential to convert dimers of the bacterial chromosome into monomers to permit their segregation at cell division. It also contributes to the segregational stability of plasmids. In the complex XerC specifically exchanges the top DNA strands. In Escherichia coli O45:K1 (strain S88 / ExPEC), this protein is Tyrosine recombinase XerC.